The following is a 394-amino-acid chain: Elongation factor Tu (394 aa).

The region spanning 10–204 (KPHVNVGTIG…HLDTYIPEPE (195 aa)) is the tr-type G domain. Positions 19–26 (GHVDHGKT) are G1. 19–26 (GHVDHGKT) lines the GTP pocket. Residue Thr26 participates in Mg(2+) binding. The interval 60-64 (GITIN) is G2. Residues 81-84 (DCPG) are G3. Residues 81–85 (DCPGH) and 136–139 (NKCD) contribute to the GTP site. The G4 stretch occupies residues 136-139 (NKCD). A G5 region spans residues 174-176 (SAL).

This sequence belongs to the TRAFAC class translation factor GTPase superfamily. Classic translation factor GTPase family. EF-Tu/EF-1A subfamily. As to quaternary structure, monomer.

The protein localises to the cytoplasm. The enzyme catalyses GTP + H2O = GDP + phosphate + H(+). GTP hydrolase that promotes the GTP-dependent binding of aminoacyl-tRNA to the A-site of ribosomes during protein biosynthesis. The polypeptide is Elongation factor Tu (Actinobacillus pleuropneumoniae serotype 5b (strain L20)).